Here is a 358-residue protein sequence, read N- to C-terminus: Fructose-bisphosphate aldolase 7, cytosolic (358 aa).

Ser2 carries the post-translational modification N-acetylserine. Substrate is bound at residue Arg52. Cys68 is modified (S-glutathionyl cysteine; transient). Lys142 contacts substrate. Cys173 is modified (S-glutathionyl cysteine; transient; alternate). Cys173 is modified (S-nitrosocysteine; transient; alternate). Glu183 (proton acceptor) is an active-site residue. The Schiff-base intermediate with dihydroxyacetone-P role is filled by Lys225. 266 to 268 (SGI) provides a ligand contact to substrate.

This sequence belongs to the class I fructose-bisphosphate aldolase family. As to quaternary structure, homotetramer. In terms of processing, S-glutathionylated at Cys-68 and Cys-173. S-nitrosylated at Cys-173. Highly expressed in flowers, and at lower levels in rosettes leaves and cauline leaves.

It localises to the cytoplasm. Its subcellular location is the cytosol. The enzyme catalyses beta-D-fructose 1,6-bisphosphate = D-glyceraldehyde 3-phosphate + dihydroxyacetone phosphate. The protein operates within carbohydrate degradation; glycolysis; D-glyceraldehyde 3-phosphate and glycerone phosphate from D-glucose: step 4/4. In terms of biological role, plays a key role in glycolysis and gluconeogenesis. The protein is Fructose-bisphosphate aldolase 7, cytosolic of Arabidopsis thaliana (Mouse-ear cress).